The sequence spans 127 residues: Putative B3 domain-containing protein At4g12617 (127 aa).

The TF-B3 DNA-binding region spans 35–127 (IMMPKTLLEA…HTRLNFKHVA (93 aa)).

The protein resides in the nucleus. This chain is Putative B3 domain-containing protein At4g12617, found in Arabidopsis thaliana (Mouse-ear cress).